Consider the following 196-residue polypeptide: GTP cyclohydrolase-2 (196 aa).

49–53 (RVHSE) lines the GTP pocket. Residues Cys-54, Cys-65, and Cys-67 each coordinate Zn(2+). Residues Gln-70, 92 to 94 (EGR), and Thr-114 contribute to the GTP site. Asp-126 serves as the catalytic Proton acceptor. Arg-128 functions as the Nucleophile in the catalytic mechanism. The GTP site is built by Thr-149 and Lys-154.

This sequence belongs to the GTP cyclohydrolase II family. Homodimer. The cofactor is Zn(2+).

The enzyme catalyses GTP + 4 H2O = 2,5-diamino-6-hydroxy-4-(5-phosphoribosylamino)-pyrimidine + formate + 2 phosphate + 3 H(+). The protein operates within cofactor biosynthesis; riboflavin biosynthesis; 5-amino-6-(D-ribitylamino)uracil from GTP: step 1/4. In terms of biological role, catalyzes the conversion of GTP to 2,5-diamino-6-ribosylamino-4(3H)-pyrimidinone 5'-phosphate (DARP), formate and pyrophosphate. The chain is GTP cyclohydrolase-2 from Shigella boydii serotype 18 (strain CDC 3083-94 / BS512).